Consider the following 221-residue polypeptide: Very-long-chain (3R)-3-hydroxyacyl-CoA dehydratase PASTICCINO 2A (221 aa).

At 1–11 the chain is on the cytoplasmic side; the sequence is MAGVGSAVRRL. A helical membrane pass occupies residues 12–32; the sequence is YLSVYNWAVFFGWAQVLYYAV. At 33 to 51 the chain is on the lumenal side; sequence TTLLESGHEAVYAAVERPL. Residues 52–70 form a helical membrane-spanning segment; it reads QFAQTAAFLEILHGLVGLV. The Cytoplasmic portion of the chain corresponds to 71–76; the sequence is RSPVSA. A helical transmembrane segment spans residues 77-95; it reads TLPQIGSRLFLTWGILWSF. At 96–100 the chain is on the lumenal side; that stretch reads PETHS. Residues 101–121 traverse the membrane as a helical segment; the sequence is HILVTSLVISWSITEIIRYSF. Topologically, residues 122-141 are cytoplasmic; sequence FGMKEAFGFAPSWLLWLRYS. The chain crosses the membrane as a helical span at residues 142 to 165; sequence TFMVLYPTGISSEVGLIYIALPYM. Catalysis depends on residues Tyr-147 and Glu-154. Residues 166–184 lie on the Lumenal side of the membrane; that stretch reads KASEKYCLRMPNKWNFSFD. A helical membrane pass occupies residues 185–209; it reads FFYASILSLAIYVPGSPHMFTYMLA. Residues 210–221 lie on the Cytoplasmic side of the membrane; that stretch reads QRKKALAKAKAA.

It belongs to the very long-chain fatty acids dehydratase HACD family.

It is found in the endoplasmic reticulum membrane. The enzyme catalyses a very-long-chain (3R)-3-hydroxyacyl-CoA = a very-long-chain (2E)-enoyl-CoA + H2O. Its pathway is lipid metabolism; fatty acid biosynthesis. Catalyzes the third of the four reactions of the long-chain fatty acids elongation cycle. This endoplasmic reticulum-bound enzymatic process, allows the addition of two carbons to the chain of long- and very long-chain fatty acids/VLCFAs per cycle. This enzyme catalyzes the dehydration of the 3-hydroxyacyl-CoA intermediate into trans-2,3-enoyl-CoA, within each cycle of fatty acid elongation. Thereby, it participates in the production of VLCFAs of different chain lengths that are involved in multiple biological processes as precursors of membrane lipids and lipid mediators. May be an anti-phosphatase that prevents CDKA-1 dephosphorylation and activation. Involved in the hormonal control of cell division and differentiation. Required for proliferation control of meristematic and non-meristematic cells. Negative regulator of the cell cycle. The protein is Very-long-chain (3R)-3-hydroxyacyl-CoA dehydratase PASTICCINO 2A (PAS2A) of Oryza sativa subsp. japonica (Rice).